Reading from the N-terminus, the 308-residue chain is Porphobilinogen deaminase (308 aa).

Cys240 carries the S-(dipyrrolylmethanemethyl)cysteine modification.

Belongs to the HMBS family. As to quaternary structure, monomer. Requires dipyrromethane as cofactor.

It carries out the reaction 4 porphobilinogen + H2O = hydroxymethylbilane + 4 NH4(+). Its pathway is porphyrin-containing compound metabolism; protoporphyrin-IX biosynthesis; coproporphyrinogen-III from 5-aminolevulinate: step 2/4. Tetrapolymerization of the monopyrrole PBG into the hydroxymethylbilane pre-uroporphyrinogen in several discrete steps. The protein is Porphobilinogen deaminase of Campylobacter lari (strain RM2100 / D67 / ATCC BAA-1060).